The sequence spans 37 residues: Large ribosomal subunit protein bL36A (37 aa).

Belongs to the bacterial ribosomal protein bL36 family.

The chain is Large ribosomal subunit protein bL36A from Clavibacter sepedonicus (Clavibacter michiganensis subsp. sepedonicus).